The following is a 258-amino-acid chain: Phosphoadenosine 5'-phosphosulfate reductase (258 aa).

The active-site Nucleophile; cysteine thiosulfonate intermediate is Cys-244.

The protein belongs to the PAPS reductase family. CysH subfamily.

It is found in the cytoplasm. The catalysed reaction is [thioredoxin]-disulfide + sulfite + adenosine 3',5'-bisphosphate + 2 H(+) = [thioredoxin]-dithiol + 3'-phosphoadenylyl sulfate. Its pathway is sulfur metabolism; hydrogen sulfide biosynthesis; sulfite from sulfate: step 3/3. Catalyzes the formation of sulfite from phosphoadenosine 5'-phosphosulfate (PAPS) using thioredoxin as an electron donor. The protein is Phosphoadenosine 5'-phosphosulfate reductase of Vibrio atlanticus (strain LGP32) (Vibrio splendidus (strain Mel32)).